The sequence spans 232 residues: Large ribosomal subunit protein uL1 (232 aa).

Belongs to the universal ribosomal protein uL1 family. As to quaternary structure, part of the 50S ribosomal subunit.

Binds directly to 23S rRNA. The L1 stalk is quite mobile in the ribosome, and is involved in E site tRNA release. In terms of biological role, protein L1 is also a translational repressor protein, it controls the translation of the L11 operon by binding to its mRNA. The protein is Large ribosomal subunit protein uL1 of Azobacteroides pseudotrichonymphae genomovar. CFP2.